The following is a 529-amino-acid chain: Bifunctional purine biosynthesis protein PurH (529 aa).

The MGS-like domain occupies Met-1–Val-148. Position 287 is an N6-acetyllysine (Lys-287).

It belongs to the PurH family.

The catalysed reaction is (6R)-10-formyltetrahydrofolate + 5-amino-1-(5-phospho-beta-D-ribosyl)imidazole-4-carboxamide = 5-formamido-1-(5-phospho-D-ribosyl)imidazole-4-carboxamide + (6S)-5,6,7,8-tetrahydrofolate. It catalyses the reaction IMP + H2O = 5-formamido-1-(5-phospho-D-ribosyl)imidazole-4-carboxamide. The protein operates within purine metabolism; IMP biosynthesis via de novo pathway; 5-formamido-1-(5-phospho-D-ribosyl)imidazole-4-carboxamide from 5-amino-1-(5-phospho-D-ribosyl)imidazole-4-carboxamide (10-formyl THF route): step 1/1. Its pathway is purine metabolism; IMP biosynthesis via de novo pathway; IMP from 5-formamido-1-(5-phospho-D-ribosyl)imidazole-4-carboxamide: step 1/1. The polypeptide is Bifunctional purine biosynthesis protein PurH (Escherichia fergusonii (strain ATCC 35469 / DSM 13698 / CCUG 18766 / IAM 14443 / JCM 21226 / LMG 7866 / NBRC 102419 / NCTC 12128 / CDC 0568-73)).